We begin with the raw amino-acid sequence, 100 residues long: Ribosomal processing cysteine protease Prp (100 aa).

Residue His-16 is the Proton donor of the active site. The active-site Nucleophile is Cys-28.

It belongs to the Prp family. Homodimer.

Functionally, an essential cysteine protease that cleaves the N-terminus from ribosomal protein bL27. The chain is Ribosomal processing cysteine protease Prp from Mycoplasma pneumoniae (strain ATCC 29342 / M129 / Subtype 1) (Mycoplasmoides pneumoniae).